Consider the following 138-residue polypeptide: Phospholipase A2 homolog 1 (138 aa).

The N-terminal stretch at 1-16 (MRTLWIMAVLLVGVEG) is a signal peptide. 7 disulfide bridges follow: Cys42–Cys132, Cys44–Cys60, Cys59–Cys111, Cys65–Cys138, Cys66–Cys104, Cys73–Cys97, and Cys91–Cys102. The important for membrane-damaging activities in eukaryotes and bacteria; heparin-binding stretch occupies residues 121–134 (KKYKNNYLKPFCKK).

The protein belongs to the phospholipase A2 family. Group II subfamily. K49 sub-subfamily. In terms of assembly, homodimer; non-covalently linked (probable alternative/compact dimer conformation in solution). As to expression, expressed by the venom gland.

It is found in the secreted. Functionally, snake venom phospholipase A2 homolog that lacks enzymatic and anticoagulant activities. In mice, it induces conspicuous local myonecrosis, edema, and a systemic interleukin-6 response. In vitro, it is cytolytic upon myoblasts, and weakly bactericidal. A model of myotoxic mechanism has been proposed: an apo Lys49-PLA2 is activated by the entrance of a hydrophobic molecule (e.g. fatty acid) at the hydrophobic channel of the protein leading to a reorientation of a monomer. This reorientation causes a transition between 'inactive' to 'active' states, causing alignment of C-terminal and membrane-docking sites (MDoS) side-by-side and putting the membrane-disruption sites (MDiS) in the same plane, exposed to solvent and in a symmetric position for both monomers. The MDoS region stabilizes the toxin on membrane by the interaction of charged residues with phospholipid head groups. Subsequently, the MDiS region destabilizes the membrane with penetration of hydrophobic residues. This insertion causes a disorganization of the membrane, allowing an uncontrolled influx of ions (i.e. calcium and sodium), and eventually triggering irreversible intracellular alterations and cell death. The protein is Phospholipase A2 homolog 1 of Bothrops atrox (Barba amarilla).